A 142-amino-acid chain; its full sequence is Large ribosomal subunit protein uL13 (142 aa).

Belongs to the universal ribosomal protein uL13 family. Part of the 50S ribosomal subunit.

This protein is one of the early assembly proteins of the 50S ribosomal subunit, although it is not seen to bind rRNA by itself. It is important during the early stages of 50S assembly. This is Large ribosomal subunit protein uL13 from Baumannia cicadellinicola subsp. Homalodisca coagulata.